Reading from the N-terminus, the 306-residue chain is tRNA pseudouridine synthase B (306 aa).

Asp-43 functions as the Nucleophile in the catalytic mechanism.

It belongs to the pseudouridine synthase TruB family. Type 1 subfamily.

It catalyses the reaction uridine(55) in tRNA = pseudouridine(55) in tRNA. Responsible for synthesis of pseudouridine from uracil-55 in the psi GC loop of transfer RNAs. The polypeptide is tRNA pseudouridine synthase B (Anaplasma marginale (strain St. Maries)).